The chain runs to 291 residues: ATP synthase gamma chain (291 aa).

The protein belongs to the ATPase gamma chain family. F-type ATPases have 2 components, CF(1) - the catalytic core - and CF(0) - the membrane proton channel. CF(1) has five subunits: alpha(3), beta(3), gamma(1), delta(1), epsilon(1). CF(0) has three main subunits: a, b and c.

It localises to the cell inner membrane. Produces ATP from ADP in the presence of a proton gradient across the membrane. The gamma chain is believed to be important in regulating ATPase activity and the flow of protons through the CF(0) complex. The chain is ATP synthase gamma chain from Caulobacter vibrioides (strain NA1000 / CB15N) (Caulobacter crescentus).